A 176-amino-acid polypeptide reads, in one-letter code: Major non-capsid protein (176 aa).

This sequence belongs to the tenuiviruses NCP family.

The protein resides in the host cytoplasm. Induces the formation of large intracellular inclusion body, organized in amorphous and crystalline arrays. Presumably the main cause of the stripe disease observed in host. This Rottboellia (Sorghum) protein is Major non-capsid protein.